A 424-amino-acid chain; its full sequence is Poly-cysteine and histidine-tailed protein (424 aa).

The N-terminal stretch at 1 to 17 is a signal peptide; sequence MAFSTIVVLFVAAVGFG. N-linked (GlcNAc...) asparagine glycosylation is present at N291. The segment covering 372-390 has biased composition (basic and acidic residues); it reads VGGKKQQKDQPESEKKAEN. The disordered stretch occupies residues 372-424; it reads VGGKKQQKDQPESEKKAENMPETTGNASHHQHRHHHGDSSSESHEQHHHHHHH. N397 carries N-linked (GlcNAc...) asparagine glycosylation.

Post-translationally, glycosylated. Expressed in larval tissues like cuticle, hypodermis and muscle (at protein level). Note=Not excreted into striated muscle fibers or nurse cell.

The protein resides in the secreted. Binds iron and zinc. May bind nickel. The protein is Poly-cysteine and histidine-tailed protein of Trichinella spiralis (Trichina worm).